A 233-amino-acid polypeptide reads, in one-letter code: MLEKCPIIALDFSDLASVTTFLEHFPKEELLFVKIGMELYYSEGPSIIRYIKSLGHRIFLDLKLHDIPNTVRSSMSVLAKLGIDMTNVHAAGGVEMMKAAREGLGEGPILLAVTQLTSTSQEQMQVDQHINLSVVDSVCHYAQKAQEAGLDGVVASAQEVKQIKKQTNEHFICLTPGIRPPQTNQLDDQKRTMTPEQARIVGADYIVVGRPITKAENPYQAYLEIKEEWNRIK.

Substrate is bound by residues Asp11, Lys34, 61-70, Thr117, Arg179, Gln189, Gly209, and Arg210; that span reads DLKLHDIPNT. Lys63 serves as the catalytic Proton donor.

It belongs to the OMP decarboxylase family. Type 1 subfamily. In terms of assembly, homodimer.

The enzyme catalyses orotidine 5'-phosphate + H(+) = UMP + CO2. Its pathway is pyrimidine metabolism; UMP biosynthesis via de novo pathway; UMP from orotate: step 2/2. Its function is as follows. Catalyzes the decarboxylation of orotidine 5'-monophosphate (OMP) to uridine 5'-monophosphate (UMP). In Streptococcus agalactiae serotype III (strain NEM316), this protein is Orotidine 5'-phosphate decarboxylase.